The sequence spans 29 residues: GLPCGETCFTGKCYTPGCSCSYPICKKIN.

The cyclopeptide (Gly-Asn) cross-link spans 1-29 (GLPCGETCFTGKCYTPGCSCSYPICKKIN). Disulfide bonds link Cys4–Cys18, Cys8–Cys20, and Cys13–Cys25.

In terms of processing, this is a cyclic peptide.

Probably participates in a plant defense mechanism. In Viola odorata (Sweet violet), this protein is Cycloviolacin-O16.